Consider the following 397-residue polypeptide: Elongation factor Tu (397 aa).

Residues 10–207 (KPHVNIGTIG…AVDESIPDPV (198 aa)) form the tr-type G domain. The tract at residues 19 to 26 (GHVDHGKT) is G1. 19 to 26 (GHVDHGKT) is a binding site for GTP. A Mg(2+)-binding site is contributed by T26. Residues 63–67 (GITIN) form a G2 region. The segment at 84 to 87 (DAPG) is G3. Residues 84–88 (DAPGH) and 139–142 (NKAD) contribute to the GTP site. A G4 region spans residues 139-142 (NKAD). A G5 region spans residues 177-179 (SGL).

Belongs to the TRAFAC class translation factor GTPase superfamily. Classic translation factor GTPase family. EF-Tu/EF-1A subfamily. In terms of assembly, monomer.

It is found in the cytoplasm. The catalysed reaction is GTP + H2O = GDP + phosphate + H(+). GTP hydrolase that promotes the GTP-dependent binding of aminoacyl-tRNA to the A-site of ribosomes during protein biosynthesis. The sequence is that of Elongation factor Tu from Tropheryma whipplei (strain TW08/27) (Whipple's bacillus).